Consider the following 387-residue polypeptide: Large ribosomal subunit protein uL3 (387 aa).

This sequence belongs to the universal ribosomal protein uL3 family.

It localises to the cytoplasm. The protein is Large ribosomal subunit protein uL3 (RPL3) of Candida glabrata (strain ATCC 2001 / BCRC 20586 / JCM 3761 / NBRC 0622 / NRRL Y-65 / CBS 138) (Yeast).